Reading from the N-terminus, the 302-residue chain is Lipooligosaccharide biosynthesis protein lex-1 (302 aa).

7 consecutive repeat copies span residues Ser42–Gln45, Ser46–Gln49, Ser50–Gln53, Ser54–Gln57, Ser58–Gln61, Ser62–Gln65, and Ser66–Gln69. Positions Ser42–Gln69 are 7 X 4 AA tandem repeats of S-I-N-Q.

The protein belongs to the glycosyltransferase 25 family.

Its function is as follows. Involved in extracellular lipooligosaccharide (LOS) biosynthesis and virulence expression. Involved in the synthesis of the oligosaccharide moiety of the LOS molecule by adding GalNAc. The sequence is that of Lipooligosaccharide biosynthesis protein lex-1 (lex1) from Haemophilus influenzae (strain ATCC 51907 / DSM 11121 / KW20 / Rd).